A 565-amino-acid chain; its full sequence is Mitochondrial distribution and morphology protein 34 (565 aa).

In terms of domain architecture, SMP-LTD spans Met1 to Glu208. Polar residues predominate over residues Ser209 to Gly220. Disordered regions lie at residues Ser209 to Leu241, Phe347 to Ala463, and Met533 to His565. Positions Pro353–Arg367 are enriched in basic residues. Positions Val368 to Asp378 are enriched in basic and acidic residues. A compositionally biased stretch (low complexity) spans Ser382–Ser391. 2 stretches are compositionally biased toward polar residues: residues Glu392 to Ser402 and Gln439 to Ala463.

This sequence belongs to the MDM34 family. In terms of assembly, component of the ER-mitochondria encounter structure (ERMES) or MDM complex, composed of mmm1, mdm10, mdm12 and mdm34.

Its subcellular location is the mitochondrion outer membrane. Component of the ERMES/MDM complex, which serves as a molecular tether to connect the endoplasmic reticulum (ER) and mitochondria. Components of this complex are involved in the control of mitochondrial shape and protein biogenesis, and function in nonvesicular lipid trafficking between the ER and mitochondria. Mdm34 is required for the interaction of the ER-resident membrane protein mmm1 and the outer mitochondrial membrane-resident beta-barrel protein mdm10. This chain is Mitochondrial distribution and morphology protein 34, found in Talaromyces marneffei (strain ATCC 18224 / CBS 334.59 / QM 7333) (Penicillium marneffei).